The following is a 535-amino-acid chain: Peptide chain release factor 3 (535 aa).

The 269-residue stretch at 8–276 folds into the tr-type G domain; it reads ARRRTFAIIS…ALVDLAPQPG (269 aa). Residues 17 to 24, 85 to 89, and 139 to 142 contribute to the GTP site; these read SHPDAGKT, DTPGH, and NKMD.

Belongs to the TRAFAC class translation factor GTPase superfamily. Classic translation factor GTPase family. PrfC subfamily.

Its subcellular location is the cytoplasm. Increases the formation of ribosomal termination complexes and stimulates activities of RF-1 and RF-2. It binds guanine nucleotides and has strong preference for UGA stop codons. It may interact directly with the ribosome. The stimulation of RF-1 and RF-2 is significantly reduced by GTP and GDP, but not by GMP. This is Peptide chain release factor 3 from Bordetella avium (strain 197N).